Reading from the N-terminus, the 796-residue chain is Merozoite surface protein P92 (796 aa).

An N-terminal signal peptide occupies residues 1-26; sequence MFAVNLKICIFLSLVSFLLQCKNTLA. N-linked (GlcNAc...) asparagine glycans are attached at residues N27, N37, N65, N71, N168, N240, N275, N359, N502, N511, N607, N633, N728, and N765. The 150-residue stretch at 571 to 720 folds into the 6-Cys domain; sequence KYEGIDLTDS…NSIKQEINKK (150 aa). 2 disulfide bridges follow: C614/C691 and C625/C689.

Interacts with host complement factor CFH isoform 1 (via sushi 4-6 domains) and CFH isoform FHL-1 (via sushi 4-6 domains); this interaction recruits CFH onto the merozoite surface preventing complement-mediated cell lysis. The interaction does not affect CFH activity.

The protein resides in the cell surface. It is found in the cell membrane. Its function is as follows. During the asexual blood stage, recruits host complement factor H CFH to the surface of merozoites resulting in the down-regulation of the host complement alternative pathway and thus, protecting merozoites from complement-mediated lysis. This chain is Merozoite surface protein P92, found in Plasmodium falciparum (isolate 3D7).